A 321-amino-acid chain; its full sequence is Sialic acid-binding periplasmic protein SiaP (321 aa).

The N-terminal stretch at M1 to A22 is a signal peptide.

This sequence belongs to the bacterial solute-binding protein 7 family. In terms of assembly, the complex comprises the extracytoplasmic solute receptor protein SiaP, and the two transmembrane proteins SiaQ and SiaM.

It is found in the periplasm. Part of the tripartite ATP-independent periplasmic (TRAP) transport system SiaPQM that catalyzes unidirectional Na(+)-dependent sialic acid uptake. Binds the common sialic acid N-acetylneuraminic acid (Neu5Ac) with a high affinity. The chain is Sialic acid-binding periplasmic protein SiaP from Vibrio cholerae serotype O1 (strain ATCC 39315 / El Tor Inaba N16961).